Consider the following 215-residue polypeptide: MVFRRFVEVGRVAYVSFGPHAGKLVAIVDVIDQNRALVDGPCTQVRRQAMPFKCMQLTDFILKFPHSAHQKYVRQAWQKADINTKWAATRWAKKIEARERKAKMTDFDRFKVMKAKKMRNRIIKNEVKKLQKAALLKASPKKAPGTKGTAAAAAAAAAAKVPAKKITAASKKAPAQKVPAQKATGQKAAPAPKAQKGQKAPAQKAPAPKASGKKA.

An N6-acetyllysine modification is found at K79. K85 is modified (N6-acetyllysine; alternate). The residue at position 85 (K85) is an N6-succinyllysine; alternate. K124 is covalently cross-linked (Glycyl lysine isopeptide (Lys-Gly) (interchain with G-Cter in SUMO2)). The residue at position 139 (S139) is a Phosphoserine. The segment at 161–215 is disordered; sequence VPAKKITAASKKAPAQKVPAQKATGQKAAPAPKAQKGQKAPAQKAPAPKASGKKA. 6 tandem repeats follow at residues 171–175, 176–180, 181–185, 186–190, 193–195, and 196–198. Positions 171–190 are 4 X 5 AA tandem repeats of Q-K-A-[PAS]-X; that stretch reads KKAPAQKVPAQKATGQKAAP. The tract at residues 193–198 is 2 X 3 AA tandem repeats of K-[GA]-Q; that stretch reads KAQKGQ. Residue K204 is modified to N6-succinyllysine.

It belongs to the eukaryotic ribosomal protein eL14 family. In terms of assembly, component of the large ribosomal subunit.

The protein resides in the cytoplasm. Its function is as follows. Component of the large ribosomal subunit. The ribosome is a large ribonucleoprotein complex responsible for the synthesis of proteins in the cell. This chain is Large ribosomal subunit protein eL14 (RPL14), found in Homo sapiens (Human).